Consider the following 597-residue polypeptide: Phragmoplastin interacting protein 1 (597 aa).

The disordered stretch occupies residues 18–136; sequence ESLSVSVSET…KTPKKAEEGN (119 aa). The segment covering 20–29 has biased composition (polar residues); sequence LSVSVSETNP. Over residues 30-40 the composition is skewed to low complexity; the sequence is QSQSLKLLLDS. Composition is skewed to basic residues over residues 43–53 and 112–129; these read HKPRLSKREKR and QKKKNKKKKKKRKVNKTP. The Nuclear localization signal signature appears at 112 to 119; it reads QKKKNKKK. RRM domains lie at 161–238 and 262–338; these read NKLY…QYVK and NRVY…CALK. 3 CCHC-type zinc fingers span residues 397-411, 481-495, and 576-591; these read CYECGEKGHLSTACP and CYECGEKGHLSSACPN.

In terms of assembly, interacts with phragmoplastins (e.g. DRP1A, DRP1B, DRP1C, DRP1D and DRP1E) and with GTP-bound ARAC11/ROP1 as well as with Ran2 transcripts.

It is found in the nucleus. It localises to the cell membrane. The protein resides in the cytoplasm. Its subcellular location is the cytoskeleton. The protein localises to the phragmoplast. RNA-binding protein which mediates polarized mRNA (e.g. Ran2 transcripts mRNA) transport from the nucleus to the vicinity of the cell plate during cytokinesis and phragmoplast formation. This chain is Phragmoplastin interacting protein 1, found in Arabidopsis thaliana (Mouse-ear cress).